The primary structure comprises 229 residues: Cytidylate kinase (229 aa).

Residue 12–20 (GPSGSGKGT) coordinates ATP.

Belongs to the cytidylate kinase family. Type 1 subfamily.

It localises to the cytoplasm. It catalyses the reaction CMP + ATP = CDP + ADP. The catalysed reaction is dCMP + ATP = dCDP + ADP. This is Cytidylate kinase from Pseudomonas fluorescens (strain Pf0-1).